The following is a 275-amino-acid chain: 4-diphosphocytidyl-2-C-methyl-D-erythritol kinase (275 aa).

Lys-14 is a catalytic residue. Residue 98-108 coordinates ATP; the sequence is PMGAGLGGGSS. The active site involves Asp-140.

The protein belongs to the GHMP kinase family. IspE subfamily.

The catalysed reaction is 4-CDP-2-C-methyl-D-erythritol + ATP = 4-CDP-2-C-methyl-D-erythritol 2-phosphate + ADP + H(+). Its pathway is isoprenoid biosynthesis; isopentenyl diphosphate biosynthesis via DXP pathway; isopentenyl diphosphate from 1-deoxy-D-xylulose 5-phosphate: step 3/6. Catalyzes the phosphorylation of the position 2 hydroxy group of 4-diphosphocytidyl-2C-methyl-D-erythritol. The protein is 4-diphosphocytidyl-2-C-methyl-D-erythritol kinase of Francisella philomiragia subsp. philomiragia (strain ATCC 25017 / CCUG 19701 / FSC 153 / O#319-036).